We begin with the raw amino-acid sequence, 283 residues long: Acetylglutamate kinase (283 aa).

Substrate is bound by residues G63–G64, R85, and N178.

The protein belongs to the acetylglutamate kinase family. ArgB subfamily.

It localises to the plastid. The protein localises to the chloroplast. It catalyses the reaction N-acetyl-L-glutamate + ATP = N-acetyl-L-glutamyl 5-phosphate + ADP. It functions in the pathway amino-acid biosynthesis; L-arginine biosynthesis; N(2)-acetyl-L-ornithine from L-glutamate: step 2/4. Catalyzes the ATP-dependent phosphorylation of N-acetyl-L-glutamate. This is Acetylglutamate kinase from Porphyra purpurea (Red seaweed).